Reading from the N-terminus, the 662-residue chain is Glycogen debranching enzyme (662 aa).

Asp-338 functions as the Nucleophile in the catalytic mechanism. Glu-373 (proton donor) is an active-site residue.

This sequence belongs to the glycosyl hydrolase 13 family.

The catalysed reaction is Hydrolysis of (1-&gt;6)-alpha-D-glucosidic linkages to branches with degrees of polymerization of three or four glucose residues in limit dextrin.. Its pathway is glycan degradation; glycogen degradation. Its function is as follows. Removes maltotriose and maltotetraose chains that are attached by 1,6-alpha-linkage to the limit dextrin main chain, generating a debranched limit dextrin. The chain is Glycogen debranching enzyme from Yersinia pseudotuberculosis serotype IB (strain PB1/+).